The following is a 442-amino-acid chain: HTH-type transcriptional regulator NorG (442 aa).

The 45-residue stretch at 2–46 (KIPSHRQLAIQYNVNRVTIIKSIELLEAEGFIYTKVGSGTYVNDY) folds into the HTH gntR-type domain. Positions 6-25 (HRQLAIQYNVNRVTIIKSIE) form a DNA-binding region, H-T-H motif. An N6-(pyridoxal phosphate)lysine modification is found at lysine 288.

The protein in the C-terminal section; belongs to the class-I pyridoxal-phosphate-dependent aminotransferase family. Requires pyridoxal 5'-phosphate as cofactor.

In terms of biological role, positively regulates the expression of the NorB efflux pump and negatively regulates the expression of the AbcA efflux pump. Binds specifically to the promoters of norA, norB and norC and abcA genes. Could also have an aminotransferase activity. The polypeptide is HTH-type transcriptional regulator NorG (norG) (Staphylococcus aureus (strain USA300)).